The primary structure comprises 657 residues: MAPGLDLIWMVISFLLLIHLSSQQETGFSFNGFRQGDLHVDGVAQILPGGLLRLTDTSEQKKGHAFFRQPLVFNSSEPLSFSTHFVCAMVRKPGVTGGNGIAFFLSPSMDLTNADATQYLGLFNTTTNRSPSSHIFAIELDTVQSAEFDDIDNNHVGIDVNSLTSVESAPASYFSDKKGLNKSISLLSGDSIQVWVDFDGTVLNVSLAPLGIRKPSQSLISRSMNLSEVIQDRMFVGFSAATGQLANNHYILGWSFSRSKASLQSLDISKLPQVPHPKMKTSLLLILLLIVLGIILLVLLVGAYLYRRNKYAEVREEWEKEYGPHRYSYKSLYKATKGFHKDGFLGKGGFGEVYKGTLPQEDIAVKRFSHHGERGMKQFVAEIASMGCLDHRNLVPLFGYCRRKGEFLLVSKYMPNGSLDQFLFHNREPSLTWSKRLGILKGIASALKYLHTEATQVVLHRDIKASNVMLDTDFTGKLGDFGMARFHDHGANPTTTGAVGTVGYMGPELTSMGASTKTDVYAFGALILEVTCGRRPVEPNLPIEKQLLVKWVCDCWKRKDLISARDPKLSGELIPQIEMVLKLGLLCTNLVPESRPDMVKVVQYLDRQVSLPDFSPDSPGIGIVTPVLVGGSSTVISNISSPVTEFITHSIQYGIGR.

The first 23 residues, 1–23, serve as a signal peptide directing secretion; that stretch reads MAPGLDLIWMVISFLLLIHLSSQ. Topologically, residues 24-282 are extracellular; it reads QETGFSFNGF…QVPHPKMKTS (259 aa). Residues 25-257 form a legume-lectin like region; the sequence is ETGFSFNGFR…NHYILGWSFS (233 aa). N74, N124, N181, N204, and N225 each carry an N-linked (GlcNAc...) asparagine glycan. A helical membrane pass occupies residues 283 to 303; sequence LLLILLLIVLGIILLVLLVGA. Topologically, residues 304 to 657 are cytoplasmic; that stretch reads YLYRRNKYAE…THSIQYGIGR (354 aa). One can recognise a Protein kinase domain in the interval 339–611; that stretch reads FHKDGFLGKG…VQYLDRQVSL (273 aa). ATP is bound by residues 345-353 and K366; that span reads LGKGGFGEV. D462 functions as the Proton acceptor in the catalytic mechanism.

The protein in the C-terminal section; belongs to the protein kinase superfamily. Ser/Thr protein kinase family. It in the N-terminal section; belongs to the leguminous lectin family.

It localises to the cell membrane. It catalyses the reaction L-seryl-[protein] + ATP = O-phospho-L-seryl-[protein] + ADP + H(+). The enzyme catalyses L-threonyl-[protein] + ATP = O-phospho-L-threonyl-[protein] + ADP + H(+). Functionally, involved in resistance response to the pathogenic fungus Alternaria brassicicola. The chain is L-type lectin-domain containing receptor kinase I.8 from Arabidopsis thaliana (Mouse-ear cress).